Reading from the N-terminus, the 344-residue chain is tRNA N6-adenosine threonylcarbamoyltransferase (344 aa).

Residues His111 and His115 each contribute to the Fe cation site. Residues 134 to 138, Asp167, Gly180, and Asn274 contribute to the substrate site; that span reads LVSGG. Asp302 lines the Fe cation pocket.

It belongs to the KAE1 / TsaD family. Requires Fe(2+) as cofactor.

It is found in the cytoplasm. The enzyme catalyses L-threonylcarbamoyladenylate + adenosine(37) in tRNA = N(6)-L-threonylcarbamoyladenosine(37) in tRNA + AMP + H(+). Its function is as follows. Required for the formation of a threonylcarbamoyl group on adenosine at position 37 (t(6)A37) in tRNAs that read codons beginning with adenine. Is involved in the transfer of the threonylcarbamoyl moiety of threonylcarbamoyl-AMP (TC-AMP) to the N6 group of A37, together with TsaE and TsaB. TsaD likely plays a direct catalytic role in this reaction. The sequence is that of tRNA N6-adenosine threonylcarbamoyltransferase from Dechloromonas aromatica (strain RCB).